Reading from the N-terminus, the 856-residue chain is Mechanosensitive ion channel protein 6 (856 aa).

Disordered regions lie at residues 45-86 and 116-226; these read GEGN…DPPT and RGLT…PFAA. Basic and acidic residues-rich tracts occupy residues 70–85 and 129–140; these read QQKD…EDPP and TKRDPVGRRDSR. Residues 155 to 168 are compositionally biased toward polar residues; that stretch reads SGNNAPIQRSSSTL. Phosphoserine is present on serine 211. A compositionally biased stretch (acidic residues) spans 217-226; the sequence is EEEEDDPFAA. A run of 4 helical transmembrane segments spans residues 242 to 262, 283 to 303, 323 to 343, and 360 to 380; these read IVLE…TLAI, LVLI…VFFI, AVQN…LFDE, and IFVC…LVKV. Residue serine 462 is modified to Phosphoserine. The next 2 membrane-spanning stretches (helical) occupy residues 615 to 635 and 651 to 671; these read MVNI…LGIT and AFIF…LFVI.

The protein belongs to the MscS (TC 1.A.23) family.

It is found in the membrane. Functionally, mechanosensitive channel that opens in response to stretch forces in the membrane lipid bilayer. This is Mechanosensitive ion channel protein 6 (MSL6) from Arabidopsis thaliana (Mouse-ear cress).